We begin with the raw amino-acid sequence, 84 residues long: MAHKKGGGSTKNGRDSNPKYLGIKASGGSSVSAGSIIVRQRGTVFKPGNNAGIGKDHTIFALVDGNVHFRNTRNDKKLIDILPS.

The disordered stretch occupies residues 1–29 (MAHKKGGGSTKNGRDSNPKYLGIKASGGS).

It belongs to the bacterial ribosomal protein bL27 family.

The polypeptide is Large ribosomal subunit protein bL27 (Chlorobium phaeobacteroides (strain BS1)).